Here is a 405-residue protein sequence, read N- to C-terminus: S-arrestin (405 aa).

Thr-234 bears the Phosphothreonine mark.

Belongs to the arrestin family. In terms of assembly, monomer. Homodimer. Homotetramer. Interacts with RHO (via the phosphorylated C-terminus). Detected in retina, in the proximal portion of the outer segment of rod photoreceptor cells (at protein level).

It localises to the cell projection. The protein localises to the cilium. Its subcellular location is the photoreceptor outer segment. The protein resides in the membrane. Binds to photoactivated, phosphorylated RHO and terminates RHO signaling via G-proteins by competing with G-proteins for the same binding site on RHO. May play a role in preventing light-dependent degeneration of retinal photoreceptor cells. The chain is S-arrestin (SAG) from Homo sapiens (Human).